A 27-amino-acid polypeptide reads, in one-letter code: ADKKIALVGAGNIGGTLAHLIGLKXLL.

9-14 (GAGNIG) contacts NAD(+).

This sequence belongs to the LDH/MDH superfamily. MDH type 3 family.

It carries out the reaction (S)-malate + NAD(+) = oxaloacetate + NADH + H(+). Catalyzes the reversible oxidation of malate to oxaloacetate. This Rhodospirillum rubrum protein is Malate dehydrogenase (mdh).